The following is a 68-amino-acid chain: UPF0434 protein BURPS668_0926 (68 aa).

Belongs to the UPF0434 family.

The protein is UPF0434 protein BURPS668_0926 of Burkholderia pseudomallei (strain 668).